A 768-amino-acid polypeptide reads, in one-letter code: ATP-dependent zinc metalloprotease FtsH (768 aa).

At 1 to 33 the chain is on the cytoplasmic side; that stretch reads MADRDKNDIRKRLEELRKDNNRRNNRQDNGNRS. The helical transmembrane segment at 34 to 54 threads the bilayer; sequence PFSGFLFFIFVILLFTFTLLF. The Periplasmic portion of the chain corresponds to 55 to 139; the sequence is HRDIQTYFQE…KLNSLQPSGG (85 aa). The chain crosses the membrane as a helical span at residues 140–160; it reads GFFLLLLGQFLPMIIMIGLMV. The Cytoplasmic portion of the chain corresponds to 161–768; sequence YLAKKMVGGS…SNFKLPSFME (608 aa). An ATP-binding site is contributed by 238–245; sequence GRPGTGKT. A Zn(2+)-binding site is contributed by His-461. Residue Glu-462 is part of the active site. The Zn(2+) site is built by His-465 and Asp-536. Residues 647–768 form a disordered region; that stretch reads EESIQKGSEG…SNFKLPSFME (122 aa). Positions 669-698 are enriched in basic and acidic residues; it reads QENKTVEAEVHDSNLKSDTEKLAEAVREIT. Over residues 715–731 the composition is skewed to acidic residues; the sequence is KDSDDNEKNDDDNENSD.

It in the central section; belongs to the AAA ATPase family. In the C-terminal section; belongs to the peptidase M41 family. As to quaternary structure, homohexamer. The cofactor is Zn(2+).

It localises to the cell inner membrane. Its function is as follows. Acts as a processive, ATP-dependent zinc metallopeptidase for both cytoplasmic and membrane proteins. Plays a role in the quality control of integral membrane proteins. The sequence is that of ATP-dependent zinc metalloprotease FtsH from Leptotrichia buccalis (strain ATCC 14201 / DSM 1135 / JCM 12969 / NCTC 10249 / C-1013-b).